The following is a 204-amino-acid chain: ATP phosphoribosyltransferase (204 aa).

It belongs to the ATP phosphoribosyltransferase family. Short subfamily. In terms of assembly, heteromultimer composed of HisG and HisZ subunits.

The protein localises to the cytoplasm. The catalysed reaction is 1-(5-phospho-beta-D-ribosyl)-ATP + diphosphate = 5-phospho-alpha-D-ribose 1-diphosphate + ATP. Its pathway is amino-acid biosynthesis; L-histidine biosynthesis; L-histidine from 5-phospho-alpha-D-ribose 1-diphosphate: step 1/9. In terms of biological role, catalyzes the condensation of ATP and 5-phosphoribose 1-diphosphate to form N'-(5'-phosphoribosyl)-ATP (PR-ATP). Has a crucial role in the pathway because the rate of histidine biosynthesis seems to be controlled primarily by regulation of HisG enzymatic activity. The polypeptide is ATP phosphoribosyltransferase (Campylobacter concisus (strain 13826)).